The following is a 425-amino-acid chain: Decarboxylase flvG (425 aa).

Lysine 82 is modified (N6-(pyridoxal phosphate)lysine). Pyridoxal 5'-phosphate contacts are provided by residues serine 213, glycine 250, and 281–284; that span reads EPGR. Position 331–332 (331–332) interacts with substrate; that stretch reads FE. The active-site Proton donor; shared with dimeric partner is cysteine 365. Aspartate 366 provides a ligand contact to substrate. Tyrosine 395 provides a ligand contact to pyridoxal 5'-phosphate.

This sequence belongs to the Orn/Lys/Arg decarboxylase class-II family. Homodimer. Only the dimer is catalytically active, as the active sites are constructed of residues from both monomers. Pyridoxal 5'-phosphate serves as cofactor.

The protein localises to the cytoplasm. It catalyses the reaction N(6),N(6)-dimethyl-L-lysine + H(+) = N,N-dimethyl-cadaverine + CO2. It functions in the pathway secondary metabolite biosynthesis; terpenoid biosynthesis. Functionally, decarboxylase; part of the gene cluster that mediates the biosynthesis of flavunoidine, an alkaloidal terpenoid with a tetracyclic cage-like core connected to dimethylcadaverine via a C-N bond and acylated with 5,5-dimethyl-L-pipecolate. The tetracyclic core is synthesized by the terpene cyclase flvE and the cytochrome P450 monooxygenase flvD. The terpene cyclase flvE catalyzes the cyclization of farnesyl pyrophosphate (FPP) to form (1R,4R,5S)-(+)-acoradiene and the cytochrome P450 monooxygenase flvD is then responsible for oxidative conversion of (1R,4R,5S)-(+)-acoradiene into the tetracyclic cage present in the final product flavunoidine. In parallel, the N-methyltransferase flvH dimethylates L-lysine to give N,N-dimethyl-L-Lysin which is decarboxylated by flvG to afford dimethylcadaverine. The terpene cyclase-like protein flvF is the enzyme that attaches the dimethylcadaverine precusor at the C-7 of the tetracyclic cage to yield pre-flavunoidine. The cytochrome monooxygenase flvC hydroxylates the C-10 position of pre-flavunoidine whereas the NRPS flvI acylates the terpenoid core at the hydroxylated C-10 with dimethylpipecolate to yield final flavunoidine. The bifunctional enzyme flvA and the dehydrogenase flvB are responsible for the synthesis of the dimethylpipecolate precursor. The PLP-dependent lyase domain of flvA might use L-O-acetyl-homoserine and alpha-keto-isovalerate to form an intermediary ketone that can cyclize intramolecularly to yield an imine. The imine can be reduced by flvB to yield the 6-carboxylated pipecolate. The C-terminal alpha-KG-dependent oxygenase domain of flvA is then proposed to catalyze the decarboxylation to yield dimethylpipecolate. The sequence is that of Decarboxylase flvG from Aspergillus flavus (strain ATCC 200026 / FGSC A1120 / IAM 13836 / NRRL 3357 / JCM 12722 / SRRC 167).